A 141-amino-acid polypeptide reads, in one-letter code: Putative pre-16S rRNA nuclease (141 aa).

Belongs to the YqgF nuclease family.

The protein resides in the cytoplasm. Functionally, could be a nuclease involved in processing of the 5'-end of pre-16S rRNA. This Pseudomonas putida (strain ATCC 47054 / DSM 6125 / CFBP 8728 / NCIMB 11950 / KT2440) protein is Putative pre-16S rRNA nuclease.